Consider the following 1032-residue polypeptide: Integrin alpha-4 (1032 aa).

The first 34 residues, 1–34 (MIRDLGKVGKVSLLLDHIWTGILLYTVILTPADC), serve as a signal peptide directing secretion. The Extracellular portion of the chain corresponds to 35-974 (YNIDESSPML…LHNLKPKKHV (940 aa)). FG-GAP repeat units follow at residues 36 to 100 (NIDE…PNRT), 113 to 177 (KCGK…TELS), 186 to 237 (DHVR…TIKS), 238 to 291 (YVDL…EKQL), 292 to 351 (TILF…GAME), 353 to 411 (LKFE…GITP), and 415 to 477 (QRLQ…LPST). Asn81 and Asn98 each carry an N-linked (GlcNAc...) asparagine glycan. Intrachain disulfides connect Cys91–Cys101, Cys144–Cys165, and Cys183–Cys198. N-linked (GlcNAc...) asparagine glycosylation is present at Asn229. Ca(2+) is bound by residues Asp314, Asn316, Asp318, Leu320, Asp322, Asp376, Asp378, Asp380, Asp384, Asp438, Asp440, Asn442, Tyr444, and Asp446. A glycan (N-linked (GlcNAc...) asparagine) is linked at Asn479. A disulfide bond links Cys485 and Cys494. N-linked (GlcNAc...) asparagine glycosylation is found at Asn496, Asn517, Asn537, Asn626, and Asn660. Intrachain disulfides connect Cys500–Cys556 and Cys622–Cys627. A disulfide bridge links Cys698 with Cys712. Residues Asn746 and Asn857 are each glycosylated (N-linked (GlcNAc...) asparagine). Intrachain disulfides connect Cys853-Cys889 and Cys896-Cys901. Residues 975 to 998 (IYMIIGISLLLGILLFSLLTYILW) form a helical membrane-spanning segment. Residues 999 to 1032 (KVGFFRRKYQPIGTEETSRRESWNYLNKDEKEVK) are Cytoplasmic-facing. The GFFKR motif signature appears at 1001 to 1005 (GFFRR).

It belongs to the integrin alpha chain family. In terms of assembly, heterodimer of an alpha and a beta subunit.

Its subcellular location is the membrane. In terms of biological role, fibronectin and V-CAM adhesion receptor. The protein is Integrin alpha-4 (itga4) of Xenopus laevis (African clawed frog).